The sequence spans 67 residues: Alpha-like toxin Lqh3 (67 aa).

In terms of domain architecture, LCN-type CS-alpha/beta spans 2-66; it reads RDGYIAQPEN…GIIVEGEKCH (65 aa). Disulfide bonds link Cys12/Cys65, Cys16/Cys37, Cys23/Cys47, and Cys27/Cys49. Ser67 bears the Serine amide mark.

The protein belongs to the long (4 C-C) scorpion toxin superfamily. Sodium channel inhibitor family. Alpha subfamily. As to quaternary structure, monomer. As to expression, expressed by the venom gland.

The protein resides in the secreted. In terms of biological role, alpha toxins bind voltage-independently at site-3 of sodium channels (Nav) and inhibit the inactivation of the activated channels, thereby blocking neuronal transmission. The dissociation is voltage-dependent. This alpha-like toxin is highly toxic to insects and competes with LqhaIT on binding to insect sodium channels. Differs from classical anti-mammalian alpha-toxins as it inhibits sodium channel inactivation in cell bodies of hippocampus brain neurons, on which the anti-mammalian Lqh2 is inactive, and is unable to affect Nav1.2 in the rat brain, on which Lqh2 is highly active. Moreover, its pharmacological properties are unique in that its binding affinity for insect channels drops &gt;30-fold at pH 8.5 versus pH 6.5, and its rate of association with receptor site-3 on both insect and mammalian sodium channels is 4-15-fold slower compared with LqhaIT and Lqh2. The protein is Alpha-like toxin Lqh3 of Leiurus hebraeus (Hebrew deathstalker scorpion).